Here is a 141-residue protein sequence, read N- to C-terminus: Hemoglobin subunit alpha-A (141 aa).

The 141-residue stretch at V1 to R141 folds into the Globin domain. H58 is a binding site for O2. Position 87 (H87) interacts with heme b.

It belongs to the globin family. As to quaternary structure, heterotetramer of two alpha chains and two beta chains. Red blood cells.

In terms of biological role, involved in oxygen transport from the lung to the various peripheral tissues. This chain is Hemoglobin subunit alpha-A (HBAA), found in Turdus merula (Common blackbird).